Consider the following 180-residue polypeptide: Putative methyltransferase YrhH (180 aa).

It belongs to the methyltransferase superfamily.

The protein is Putative methyltransferase YrhH (yrhH) of Bacillus subtilis (strain 168).